The primary structure comprises 567 residues: Urease subunit alpha (567 aa).

In terms of domain architecture, Urease spans 129–567; sequence GGIDSHIHFI…LPMAQRYFLF (439 aa). Ni(2+) is bound by residues His134, His136, and Lys217. N6-carboxylysine is present on Lys217. A substrate-binding site is contributed by His219. Residues His246 and His272 each contribute to the Ni(2+) site. His320 functions as the Proton donor in the catalytic mechanism. Asp360 provides a ligand contact to Ni(2+).

Belongs to the metallo-dependent hydrolases superfamily. Urease alpha subunit family. Heterotrimer of UreA (gamma), UreB (beta) and UreC (alpha) subunits. Three heterotrimers associate to form the active enzyme. Ni cation serves as cofactor. In terms of processing, carboxylation allows a single lysine to coordinate two nickel ions.

It is found in the cytoplasm. It carries out the reaction urea + 2 H2O + H(+) = hydrogencarbonate + 2 NH4(+). Its pathway is nitrogen metabolism; urea degradation; CO(2) and NH(3) from urea (urease route): step 1/1. In Tolumonas auensis (strain DSM 9187 / NBRC 110442 / TA 4), this protein is Urease subunit alpha.